Reading from the N-terminus, the 108-residue chain is Translation initiation factor 1A (108 aa).

The S1-like domain maps to 11 to 85 (SVKEVPKPAE…NKCDIIYKYS (75 aa)).

Belongs to the eIF-1A family.

Functionally, seems to be required for maximal rate of protein biosynthesis. Enhances ribosome dissociation into subunits and stabilizes the binding of the initiator Met-tRNA(I) to 40 S ribosomal subunits. The chain is Translation initiation factor 1A (eIF1A) from Sulfurisphaera tokodaii (strain DSM 16993 / JCM 10545 / NBRC 100140 / 7) (Sulfolobus tokodaii).